A 225-amino-acid polypeptide reads, in one-letter code: MSIKQWPEGERPREKLLERGAAALSDAELLAILLRVGTRGMSAVDLARYLLQEFGSLGRLMSAEVGKLSAYKGMGTASFTQFAVVREIGRRILEEELQEEITLSDPDTVADYLRFHLGQEKVEVSVALLLNRQNQLIAVRELSRGTVAENTIYIREIVKLALDEYADSLIIAHNHPGGSPEPSQEDIMFTRRLAQAMSLVDVSLLDHFIVTSQTVRSFRQLGLMP.

The region spanning 102–224 (TLSDPDTVAD…VRSFRQLGLM (123 aa)) is the MPN domain. Zn(2+) is bound by residues histidine 173, histidine 175, and aspartate 186. The JAMM motif motif lies at 173 to 186 (HNHPGGSPEPSQED).

This sequence belongs to the UPF0758 family.

In Neisseria gonorrhoeae (strain NCCP11945), this protein is UPF0758 protein NGK_1225.